Here is a 1042-residue protein sequence, read N- to C-terminus: Signal-induced proliferation-associated protein 1 (1042 aa).

Disordered stretches follow at residues 1–87 (MPMW…TSTR) and 132–153 (SQGM…EDQA). Threonine 64 is modified (phosphothreonine). Phosphoserine is present on serine 67. Polar residues predominate over residues 134–146 (GMGSHSEASSGTL). A phosphoserine mark is found at serine 182, serine 304, and serine 314. Residues 321-539 (LLTLDEQVLS…RTRQQYLQDL (219 aa)) enclose the Rap-GAP domain. A PDZ domain is found at 687 to 763 (ELALPRDGQG…VCVTVLPPDE (77 aa)). Serine 817, serine 839, and serine 912 each carry phosphoserine. The tract at residues 830 to 903 (EFLHSQNSLS…PAPELRASFL (74 aa)) is disordered. Residues 832 to 845 (LHSQNSLSPRSSLS) show a composition bias toward low complexity. Positions 946–980 (LSREGQPIPESGDPKGTPKSDAEPEPGNLSEKVSH) are disordered. The segment covering 957–967 (GDPKGTPKSDA) has biased composition (basic and acidic residues). Positions 972–1034 (GNLSEKVSHL…TRLLLASKQL (63 aa)) form a coiled coil.

In terms of assembly, interacts with RRP1B; the interaction leads to inhibition of SIPA1 GTPase activity. Expressed in fetal as well as in adult tissues. Expressed abundantly in the lymphoid tissues such as thymus, spleen and peripheral blood lymphocytes and also shows a significant expression in the spinal cord.

It is found in the nucleus. Its subcellular location is the cytoplasm. It localises to the perinuclear region. The protein localises to the endomembrane system. In terms of biological role, GTPase activator for the nuclear Ras-related regulatory proteins Rap1 and Rap2 in vitro, converting them to the putatively inactive GDP-bound state. Affects cell cycle progression. The chain is Signal-induced proliferation-associated protein 1 (SIPA1) from Homo sapiens (Human).